The following is a 148-amino-acid chain: D-aminoacyl-tRNA deacylase (148 aa).

A Gly-cisPro motif, important for rejection of L-amino acids motif is present at residues 137-138 (GP).

This sequence belongs to the DTD family. Homodimer.

It is found in the cytoplasm. It carries out the reaction glycyl-tRNA(Ala) + H2O = tRNA(Ala) + glycine + H(+). The enzyme catalyses a D-aminoacyl-tRNA + H2O = a tRNA + a D-alpha-amino acid + H(+). Functionally, an aminoacyl-tRNA editing enzyme that deacylates mischarged D-aminoacyl-tRNAs. Also deacylates mischarged glycyl-tRNA(Ala), protecting cells against glycine mischarging by AlaRS. Acts via tRNA-based rather than protein-based catalysis; rejects L-amino acids rather than detecting D-amino acids in the active site. By recycling D-aminoacyl-tRNA to D-amino acids and free tRNA molecules, this enzyme counteracts the toxicity associated with the formation of D-aminoacyl-tRNA entities in vivo and helps enforce protein L-homochirality. The protein is D-aminoacyl-tRNA deacylase of Aquifex aeolicus (strain VF5).